Consider the following 203-residue polypeptide: Glycerol-3-phosphate acyltransferase (203 aa).

5 consecutive transmembrane segments (helical) span residues 5–25 (VLGL…FGVV), 55–75 (KLGI…ILVA), 88–108 (FTVL…WLGF), 114–134 (VATG…AGAV), and 162–182 (FVAH…AALI).

This sequence belongs to the PlsY family. As to quaternary structure, probably interacts with PlsX.

The protein localises to the cell inner membrane. The enzyme catalyses an acyl phosphate + sn-glycerol 3-phosphate = a 1-acyl-sn-glycero-3-phosphate + phosphate. It functions in the pathway lipid metabolism; phospholipid metabolism. In terms of biological role, catalyzes the transfer of an acyl group from acyl-phosphate (acyl-PO(4)) to glycerol-3-phosphate (G3P) to form lysophosphatidic acid (LPA). This enzyme utilizes acyl-phosphate as fatty acyl donor, but not acyl-CoA or acyl-ACP. The chain is Glycerol-3-phosphate acyltransferase from Anaeromyxobacter sp. (strain Fw109-5).